Consider the following 118-residue polypeptide: MATATSKPKAVERIKMRIRKGDTVQVIAGKDKGKTGAVLRTLPNENRVIVEGVNMRTRHEKPSQEGESGRIVTEEASLHASNVMLYSTDKKVASRVEIVVEKDGTKKRKLKKTGEVLD.

The protein belongs to the universal ribosomal protein uL24 family. As to quaternary structure, part of the 50S ribosomal subunit.

Its function is as follows. One of two assembly initiator proteins, it binds directly to the 5'-end of the 23S rRNA, where it nucleates assembly of the 50S subunit. One of the proteins that surrounds the polypeptide exit tunnel on the outside of the subunit. The sequence is that of Large ribosomal subunit protein uL24 from Synechococcus sp. (strain CC9902).